Consider the following 131-residue polypeptide: Histone H2A.2 (131 aa).

The disordered stretch occupies residues 1 to 22 (MSGGKGKAGSSEKASTSRSAKA). Serine 2 is modified (N-acetylserine). N6-acetyllysine occurs at positions 5 and 7. An N5-methylglutamine modification is found at glutamine 105. Lysine 126 is covalently cross-linked (Glycyl lysine isopeptide (Lys-Gly) (interchain with G-Cter in SUMO)). Serine 128 carries the post-translational modification Phosphoserine. The [ST]-Q motif signature appears at 128 to 129 (SQ).

It belongs to the histone H2A family. The nucleosome is a histone octamer containing two molecules each of H2A, H2B, H3 and H4 assembled in one H3-H4 heterotetramer and two H2A-H2B heterodimers. The octamer wraps approximately 147 bp of DNA. In terms of processing, phosphorylated to form H2AS128ph (gamma-H2A) in response to DNA double-strand breaks (DSBs) generated by exogenous genotoxic agents and by stalled replication forks. Phosphorylation is dependent on the DNA damage checkpoint kinases MEC1/ATR and TEL1/ATM, spreads on either side of a detected DSB site and may mark the surrounding chromatin for recruitment of proteins required for DNA damage signaling and repair. Gamma-H2A is removed from the DNA prior to the strand invasion-primer extension step of the repair process and subsequently dephosphorylated. Dephosphorylation is necessary for efficient recovery from the DNA damage checkpoint. Post-translationally, acetylated by ESA1 to form H2AK4ac and H2AK7ac.

The protein localises to the nucleus. It is found in the chromosome. Core component of nucleosome which plays a central role in DNA double strand break (DSB) repair. Nucleosomes wrap and compact DNA into chromatin, limiting DNA accessibility to the cellular machineries which require DNA as a template. Histones thereby play a central role in transcription regulation, DNA repair, DNA replication and chromosomal stability. DNA accessibility is regulated via a complex set of post-translational modifications of histones, also called histone code, and nucleosome remodeling. This is Histone H2A.2 (HTA2) from Scheffersomyces stipitis (strain ATCC 58785 / CBS 6054 / NBRC 10063 / NRRL Y-11545) (Yeast).